Here is a 274-residue protein sequence, read N- to C-terminus: Putative pyruvate, phosphate dikinase regulatory protein (274 aa).

ADP is bound at residue 149 to 156 (GVSRSSKT).

It belongs to the pyruvate, phosphate/water dikinase regulatory protein family. PDRP subfamily.

The enzyme catalyses N(tele)-phospho-L-histidyl/L-threonyl-[pyruvate, phosphate dikinase] + ADP = N(tele)-phospho-L-histidyl/O-phospho-L-threonyl-[pyruvate, phosphate dikinase] + AMP + H(+). It catalyses the reaction N(tele)-phospho-L-histidyl/O-phospho-L-threonyl-[pyruvate, phosphate dikinase] + phosphate + H(+) = N(tele)-phospho-L-histidyl/L-threonyl-[pyruvate, phosphate dikinase] + diphosphate. In terms of biological role, bifunctional serine/threonine kinase and phosphorylase involved in the regulation of the pyruvate, phosphate dikinase (PPDK) by catalyzing its phosphorylation/dephosphorylation. The polypeptide is Putative pyruvate, phosphate dikinase regulatory protein (Rhizorhabdus wittichii (strain DSM 6014 / CCUG 31198 / JCM 15750 / NBRC 105917 / EY 4224 / RW1) (Sphingomonas wittichii)).